The sequence spans 84 residues: Small ribosomal subunit protein uS17 (84 aa).

The protein belongs to the universal ribosomal protein uS17 family. In terms of assembly, part of the 30S ribosomal subunit.

One of the primary rRNA binding proteins, it binds specifically to the 5'-end of 16S ribosomal RNA. This Histophilus somni (strain 129Pt) (Haemophilus somnus) protein is Small ribosomal subunit protein uS17.